The sequence spans 223 residues: Translation initiation factor 6 (223 aa).

The protein belongs to the eIF-6 family.

Its function is as follows. Binds to the 50S ribosomal subunit and prevents its association with the 30S ribosomal subunit to form the 70S initiation complex. This Saccharolobus islandicus (strain Y.N.15.51 / Yellowstone #2) (Sulfolobus islandicus) protein is Translation initiation factor 6.